The primary structure comprises 586 residues: A-type ATP synthase subunit A (586 aa).

G233–T240 is a binding site for ATP.

It belongs to the ATPase alpha/beta chains family. In terms of assembly, has multiple subunits with at least A(3), B(3), C, D, E, F, H, I and proteolipid K(x).

The protein localises to the cell membrane. It catalyses the reaction ATP + H2O + 4 H(+)(in) = ADP + phosphate + 5 H(+)(out). In terms of biological role, component of the A-type ATP synthase that produces ATP from ADP in the presence of a proton gradient across the membrane. The A chain is the catalytic subunit. The protein is A-type ATP synthase subunit A of Methanococcus aeolicus (strain ATCC BAA-1280 / DSM 17508 / OCM 812 / Nankai-3).